The following is a 457-amino-acid chain: Multidrug resistance protein MdtK (457 aa).

The next 12 membrane-spanning stretches (helical) occupy residues 11 to 31 (LLAL…MGFV), 53 to 73 (IWLP…PVIA), 93 to 113 (WLAG…GYII), 127 to 147 (AVGY…FQVA), 160 to 180 (GMVM…IFIY), 189 to 209 (GGVG…LAMV), 243 to 263 (LPIA…ALLV), 276 to 296 (IALN…AAVT), 314 to 334 (AART…IFTV), 350 to 370 (VVTL…SDSI), 387 to 407 (IFYI…YILA), and 418 to 438 (PAGF…MMML).

Belongs to the multi antimicrobial extrusion (MATE) (TC 2.A.66.1) family. MdtK subfamily.

It is found in the cell inner membrane. In terms of biological role, multidrug efflux pump that functions probably as a Na(+)/drug antiporter. This chain is Multidrug resistance protein MdtK, found in Escherichia coli O139:H28 (strain E24377A / ETEC).